The following is a 528-amino-acid chain: Sodium-dependent lysophosphatidylcholine symporter 1 (528 aa).

The Cytoplasmic portion of the chain corresponds to 1–37 (MAGGGGAERVRVGAAAAGLLPPSCRQPRRRESRERLS). Residues 38 to 66 (VCSKLCYAVGGAPYQTTGCALGFFLQIYL) traverse the membrane as a helical segment. Residues 67–73 (LDVAQLD) are Extracellular-facing. Residues 74–99 (PFYASIILFVGRAWDAITDPMVGFFI) traverse the membrane as a helical segment. The Cytoplasmic portion of the chain corresponds to 100–109 (SKTPWTRFGR). Residues 110–129 (LMPWIIFSTPFAVISYFLIW) traverse the membrane as a helical segment. Residues 130 to 138 (FVPDISTGQ) are Extracellular-facing. The chain crosses the membrane as a helical span at residues 139 to 161 (VMWYLIFYCIFQTLVTCFHVPYS). The Cytoplasmic segment spans residues 162–176 (ALTMFISREQSERDS). A helical membrane pass occupies residues 177–199 (ATAYRMTVEVLGTVLGTAIQGQI). Residues 200–241 (VGKAVTPCIENPPFLSETNFSVAIRNVNMTHYTGSLADTRNA) lie on the Extracellular side of the membrane. Cys-207 and Cys-460 are joined by a disulfide. 2 N-linked (GlcNAc...) asparagine glycosylation sites follow: Asn-218 and Asn-227. A helical membrane pass occupies residues 242–263 (YMVAAGVIGGLYILCAVILSVG). The Cytoplasmic portion of the chain corresponds to 264 to 295 (VREKRESSELQSDEPVSFFRGLKLVMNHGAYI). The helical transmembrane segment at 296–319 (KLITGFLFTSLAFMLLEGNFALFC) threads the bilayer. The Extracellular portion of the chain corresponds to 320–328 (TYTLGFRNE). Residues 329 to 351 (FQNILLAIMLSATLTIPFWQWFL) form a helical membrane-spanning segment. Residues 352–355 (TRFG) are Cytoplasmic-facing. Residues 356–376 (KKTAVYVGISSAVPFLITVVV) form a helical membrane-spanning segment. Residues 377 to 381 (LDSNL) lie on the Extracellular side of the membrane. Residues 382-404 (VVTYIVAVAAGISVAAAFLLPWS) traverse the membrane as a helical segment. Topologically, residues 405–427 (MLPDVIDDFKLQHPESRGHEAIF) are cytoplasmic. A helical transmembrane segment spans residues 428–450 (FSFYVFFTKFTSGVSLGISTLSL). Residues 451-467 (DFAGYQTRGCSQPSEVN) lie on the Extracellular side of the membrane. The chain crosses the membrane as a helical span at residues 468–490 (ITLKLLVSAVPVGLILLGLLLFK). Residues 491–528 (LYPIDEEKRRENKKALQDLREESNSSSESDSTELANIV) are Cytoplasmic-facing. Residues 503-513 (KKALQDLREES) are compositionally biased toward basic and acidic residues. A disordered region spans residues 503–528 (KKALQDLREESNSSSESDSTELANIV). Positions 514–528 (NSSSESDSTELANIV) are enriched in low complexity.

It belongs to the major facilitator superfamily.

Its subcellular location is the cell membrane. It localises to the endoplasmic reticulum membrane. It catalyses the reaction a 1-acyl-sn-glycero-3-phosphocholine(in) + Na(+)(in) = a 1-acyl-sn-glycero-3-phosphocholine(out) + Na(+)(out). The catalysed reaction is 1-(4Z,7Z,10Z,13Z,16Z,19Z-docosahexaenoyl)-sn-glycero-3-phosphocholine(in) + Na(+)(in) = 1-(4Z,7Z,10Z,13Z,16Z,19Z-docosahexaenoyl)-sn-glycero-3-phosphocholine(out) + Na(+)(out). It carries out the reaction 1-(9Z-octadecenoyl)-sn-glycero-3-phosphocholine(in) + Na(+)(in) = 1-(9Z-octadecenoyl)-sn-glycero-3-phosphocholine(out) + Na(+)(out). The enzyme catalyses 1-hexadecanoyl-sn-glycero-3-phosphocholine(in) + Na(+)(in) = 1-hexadecanoyl-sn-glycero-3-phosphocholine(out) + Na(+)(out). It catalyses the reaction a 1-acyl-sn-glycero-3-phosphoethanolamine(in) + Na(+)(in) = a 1-acyl-sn-glycero-3-phosphoethanolamine(out) + Na(+)(out). Its function is as follows. Sodium-dependent lysophosphatidylcholine (LPC) symporter, which plays an essential role for blood-brain barrier formation and function. Specifically expressed in endothelium of the blood-brain barrier of micro-vessels and transports LPC into the brain. Transport of LPC is essential because it constitutes the major mechanism by which docosahexaenoic acid (DHA), an omega-3 fatty acid that is essential for normal brain growth and cognitive function, enters the brain. Transports LPC carrying long-chain fatty acids such LPC oleate and LPC palmitate with a minimum acyl chain length of 14 carbons. Does not transport docosahexaenoic acid in unesterified fatty acid. This chain is Sodium-dependent lysophosphatidylcholine symporter 1, found in Gallus gallus (Chicken).